The primary structure comprises 1365 residues: Zinc finger protein 423 (1365 aa).

Basic residues predominate over residues 1-11; it reads MSRRKQAKPRS. The tract at residues 1 to 69 is disordered; that stretch reads MSRRKQAKPR…SHDERVGEED (69 aa). Residues 37-51 show a composition bias toward basic and acidic residues; it reads VSERDSDRKESRAVG. A C2H2-type 1 zinc finger spans residues 76–98; that stretch reads FTCDNCQQDFECLADLTEHRTNH. The tract at residues 99–126 is disordered; that stretch reads CPADGDDDPGLSWVASSPSSKDVASPSQ. Residues 112-126 show a composition bias toward low complexity; that stretch reads VASSPSSKDVASPSQ. 4 consecutive C2H2-type zinc fingers follow at residues 150-172, 178-200, 206-228, and 234-256; these read YPCQ…EQIH, FKCT…VKLH, YSCQ…LKTH, and FKCS…MQAH. Residues 250–280 form a disordered region; it reads QSHMQAHRKNKEHLAKKDQGKRDGSSSDVTE. Over residues 261 to 274 the composition is skewed to basic and acidic residues; sequence EHLAKKDQGKRDGS. 3 consecutive C2H2-type zinc fingers follow at residues 286-309, 318-341, and 346-368; these read YMCD…LTQH, LQCI…DRTH, and HKCP…LDSH. Positions 366–429 are disordered; sequence DSHRQPDSSN…LAPSSDHDDG (64 aa). Low complexity predominate over residues 386 to 400; it reads SVASMSSATPDSSAS. Residues 437 to 461 form a C2H2-type 9; degenerate zinc finger; it reads YSCPYCSKRDFNSLAVLEIHLKTIH. 3 C2H2-type zinc fingers span residues 469–492, 513–536, and 555–578; these read HTCQ…RKAH, FHCN…RVSH, and FFCN…QQTH. A C2H2-type 13; atypical zinc finger spans residues 603–628; sequence YSCPYCTNSPIFGSLLKLTKHIKENH. 7 C2H2-type zinc fingers span residues 675–697, 705–728, 736–759, 764–787, 794–817, 831–853, and 857–880; these read YPCN…LKSH, QSCP…LTIH, YVCE…LDMH, YHCT…AVKH, YRCT…KHSH, RKCI…ITTH, and YNCR…REKH. The segment covering 885–895 has biased composition (gly residues); the sequence is GGNGNGNGGSQ. The segment at 885–916 is disordered; that stretch reads GGNGNGNGGSQNGTPNGVTQSSKRSTAGSTAA. Positions 902–913 are enriched in polar residues; the sequence is VTQSSKRSTAGS. A C2H2-type 21; degenerate zinc finger spans residues 954–976; that stretch reads YACDICGAAYTMESLLQNHRLRD. 8 C2H2-type zinc fingers span residues 1000–1022, 1029–1051, 1090–1112, 1201–1224, 1249–1271, 1279–1301, 1310–1333, and 1340–1363; these read HKCN…AQTH, YMCP…KVTH, FRCV…GTFH, LRCS…QVDH, YQCI…VANH, HECK…LIEH, FKCP…FAVH, and YDCS…LSQH.

It belongs to the krueppel C2H2-type zinc-finger protein family.

The protein localises to the nucleus. In terms of biological role, transcription factor that can both act as an activator or a repressor depending on the context. Plays a central role in BMP signaling and olfactory neurogenesis. Associates with SMADs in response to bmp2 leading to activate transcription of BMP target genes. Acts as a transcriptional repressor involved in terminal olfactory receptor neurons differentiation. Involved in olfactory neurogenesis by participating in a developmental switch that regulates the transition from differentiation to maturation in olfactory receptor neurons. This Danio rerio (Zebrafish) protein is Zinc finger protein 423 (znf423).